A 269-amino-acid chain; its full sequence is MKIALGIEYNGQNYYGWQRQEKVRSVQEELEKALSHIANEKIDIFCAGRTDSGVSGTGQVVHFETNAIRPEKAWAFGTNAHLPDDIAVAWAKQVDDEFHARFSATARRYRYILYCNKLRSAILAGGITHCHLDLDAEKMHQAGQCLLGEQDFSSFRAAQCQSHTPWRNVHHLNVSRIGKYIIVDIQANAFVHHMVRNIVGSLIEVGAGNQPIEWMQWLLEQKNRQLAAPTAKPDGLYLVDVIYPQKFDIPKRPIGPLFLEDGLLNRPLK.

Catalysis depends on D51, which acts as the Nucleophile. Residue Y109 participates in substrate binding.

It belongs to the tRNA pseudouridine synthase TruA family. As to quaternary structure, homodimer.

It carries out the reaction uridine(38/39/40) in tRNA = pseudouridine(38/39/40) in tRNA. In terms of biological role, formation of pseudouridine at positions 38, 39 and 40 in the anticodon stem and loop of transfer RNAs. In Haemophilus influenzae (strain PittGG), this protein is tRNA pseudouridine synthase A.